We begin with the raw amino-acid sequence, 337 residues long: 1-aminocyclopropane-1-carboxylate deaminase (337 aa).

Residue K50 is modified to N6-(pyridoxal phosphate)lysine. S77 acts as the Nucleophile in catalysis.

It belongs to the ACC deaminase/D-cysteine desulfhydrase family. As to quaternary structure, homotrimer. The cofactor is pyridoxal 5'-phosphate.

It catalyses the reaction 1-aminocyclopropane-1-carboxylate + H2O = 2-oxobutanoate + NH4(+). Catalyzes a cyclopropane ring-opening reaction, the irreversible conversion of 1-aminocyclopropane-1-carboxylate (ACC) to ammonia and alpha-ketobutyrate. Allows growth on ACC as a nitrogen source. The protein is 1-aminocyclopropane-1-carboxylate deaminase of Methylobacterium nodulans (strain LMG 21967 / CNCM I-2342 / ORS 2060).